The primary structure comprises 269 residues: Phosphatidylglycerol--prolipoprotein diacylglyceryl transferase (269 aa).

A run of 3 helical transmembrane segments spans residues 21-41 (WYGI…VLEG), 54-74 (LLLY…VVFE), and 88-108 (IWDG…VILI). Arg136 contributes to the a 1,2-diacyl-sn-glycero-3-phospho-(1'-sn-glycerol) binding site. 2 helical membrane passes run 206–226 (GEVV…IEGM) and 236–256 (LRVS…AIFY).

The protein belongs to the Lgt family.

It is found in the cell membrane. It catalyses the reaction L-cysteinyl-[prolipoprotein] + a 1,2-diacyl-sn-glycero-3-phospho-(1'-sn-glycerol) = an S-1,2-diacyl-sn-glyceryl-L-cysteinyl-[prolipoprotein] + sn-glycerol 1-phosphate + H(+). Its pathway is protein modification; lipoprotein biosynthesis (diacylglyceryl transfer). Catalyzes the transfer of the diacylglyceryl group from phosphatidylglycerol to the sulfhydryl group of the N-terminal cysteine of a prolipoprotein, the first step in the formation of mature lipoproteins. This is Phosphatidylglycerol--prolipoprotein diacylglyceryl transferase from Ligilactobacillus salivarius (strain UCC118) (Lactobacillus salivarius).